The chain runs to 354 residues: Serine/threonine-protein phosphatase 2A activator 2 (354 aa).

Belongs to the PTPA-type PPIase family.

It localises to the cytoplasm. It catalyses the reaction [protein]-peptidylproline (omega=180) = [protein]-peptidylproline (omega=0). Functionally, PPIases accelerate the folding of proteins. It catalyzes the cis-trans isomerization of proline imidic peptide bonds in oligopeptides. Acts as a regulatory subunit for PP2A-like phosphatases modulating their activity or substrate specificity, probably by inducing a conformational change in the catalytic subunit, a direct target of the PPIase. Can reactivate inactive phosphatase PP2A-phosphatase methylesterase complexes (PP2Ai) in presence of ATP and Mg(2+) by dissociating the inactive form from the complex. This Yarrowia lipolytica (strain CLIB 122 / E 150) (Yeast) protein is Serine/threonine-protein phosphatase 2A activator 2 (RRD2).